A 448-amino-acid polypeptide reads, in one-letter code: Cysteine--tRNA ligase (448 aa).

Residue cysteine 29 participates in Zn(2+) binding. A 'HIGH' region motif is present at residues 31–41; that stretch reads PTVYDTAHIGN. The span at 79-91 shows a compositional bias: basic and acidic residues; sequence ATTGADRGADQAH. Positions 79-106 are disordered; that stretch reads ATTGADRGADQAHRGPLPRRHGPLNAAP. Positions 206 and 235 each coordinate Zn(2+). Residues 265–269 carry the 'KMSKS' region motif; that stretch reads RMSKS. Position 268 (lysine 268) interacts with ATP.

Belongs to the class-I aminoacyl-tRNA synthetase family. As to quaternary structure, monomer. Requires Zn(2+) as cofactor.

It is found in the cytoplasm. It carries out the reaction tRNA(Cys) + L-cysteine + ATP = L-cysteinyl-tRNA(Cys) + AMP + diphosphate. The chain is Cysteine--tRNA ligase (cysS) from Azospirillum brasilense.